A 214-amino-acid chain; its full sequence is Octanoyltransferase (214 aa).

Positions 29-214 constitute a BPL/LPL catalytic domain; that stretch reads STTPDEIWIL…EHLQKQLMPT (186 aa). Substrate is bound by residues 69-76, 146-148, and 159-161; these read RGGEITYH, ALG, and GLA. Cys177 serves as the catalytic Acyl-thioester intermediate.

This sequence belongs to the LipB family.

It is found in the cytoplasm. The enzyme catalyses octanoyl-[ACP] + L-lysyl-[protein] = N(6)-octanoyl-L-lysyl-[protein] + holo-[ACP] + H(+). It participates in protein modification; protein lipoylation via endogenous pathway; protein N(6)-(lipoyl)lysine from octanoyl-[acyl-carrier-protein]: step 1/2. Functionally, catalyzes the transfer of endogenously produced octanoic acid from octanoyl-acyl-carrier-protein onto the lipoyl domains of lipoate-dependent enzymes. Lipoyl-ACP can also act as a substrate although octanoyl-ACP is likely to be the physiological substrate. In Polynucleobacter asymbioticus (strain DSM 18221 / CIP 109841 / QLW-P1DMWA-1) (Polynucleobacter necessarius subsp. asymbioticus), this protein is Octanoyltransferase.